Here is a 190-residue protein sequence, read N- to C-terminus: Biphenyl-2,3-diol 1,2-dioxygenase 2 (190 aa).

Residues 6–124 (KFAHVVLQTS…DGNFVELQID (119 aa)) form the VOC domain. Residues H9, H72, and E120 each contribute to the Fe cation site.

Belongs to the extradiol ring-cleavage dioxygenase family. Homohexamer. Fe(2+) is required as a cofactor.

The enzyme catalyses biphenyl-2,3-diol + O2 = 2-hydroxy-6-oxo-6-phenylhexa-2,4-dienoate + H(+). It participates in xenobiotic degradation; biphenyl degradation; 2-hydroxy-2,4-pentadienoate and benzoate from biphenyl: step 3/4. This Rhodococcus globerulus protein is Biphenyl-2,3-diol 1,2-dioxygenase 2 (bphC2).